The following is a 20-amino-acid chain: Cytochrome P450 2A7 (20 aa).

This sequence belongs to the cytochrome P450 family. The cofactor is heme.

The protein resides in the endoplasmic reticulum membrane. The protein localises to the microsome membrane. The catalysed reaction is an organic molecule + reduced [NADPH--hemoprotein reductase] + O2 = an alcohol + oxidized [NADPH--hemoprotein reductase] + H2O + H(+). Its function is as follows. Exhibits a high coumarin 7-hydroxylase activity. In Papio sp. (Baboon), this protein is Cytochrome P450 2A7 (CYP2A7).